The following is a 202-amino-acid chain: Probable nicotinate-nucleotide adenylyltransferase (202 aa).

This sequence belongs to the NadD family.

It carries out the reaction nicotinate beta-D-ribonucleotide + ATP + H(+) = deamido-NAD(+) + diphosphate. The protein operates within cofactor biosynthesis; NAD(+) biosynthesis; deamido-NAD(+) from nicotinate D-ribonucleotide: step 1/1. Catalyzes the reversible adenylation of nicotinate mononucleotide (NaMN) to nicotinic acid adenine dinucleotide (NaAD). This chain is Probable nicotinate-nucleotide adenylyltransferase, found in Clostridium perfringens (strain ATCC 13124 / DSM 756 / JCM 1290 / NCIMB 6125 / NCTC 8237 / Type A).